The sequence spans 1251 residues: ATP-dependent helicase/nuclease subunit A (1251 aa).

The UvrD-like helicase ATP-binding domain maps to 5–481 (TKWTDEQWEA…IILSRNFRSR (477 aa)). 26–33 (AAAGAGKT) contacts ATP. One can recognise a UvrD-like helicase C-terminal domain in the interval 526-824 (TVGGEVEFHL…RIMSIHKSKG (299 aa)). The tract at residues 544-565 (NFTFENEGEEGRQADEGEEDEE) is disordered.

Belongs to the helicase family. AddA subfamily. Heterodimer of AddA and AddB/RexB. Mg(2+) is required as a cofactor.

It catalyses the reaction Couples ATP hydrolysis with the unwinding of duplex DNA by translocating in the 3'-5' direction.. The enzyme catalyses ATP + H2O = ADP + phosphate + H(+). The heterodimer acts as both an ATP-dependent DNA helicase and an ATP-dependent, dual-direction single-stranded exonuclease. Recognizes the chi site generating a DNA molecule suitable for the initiation of homologous recombination. The AddA nuclease domain is required for chi fragment generation; this subunit has the helicase and 3' -&gt; 5' nuclease activities. The sequence is that of ATP-dependent helicase/nuclease subunit A from Acetivibrio thermocellus (strain ATCC 27405 / DSM 1237 / JCM 9322 / NBRC 103400 / NCIMB 10682 / NRRL B-4536 / VPI 7372) (Clostridium thermocellum).